Here is a 554-residue protein sequence, read N- to C-terminus: MALRVAAFDLDGVLALPSIAGAFRRSEEALALPRDFLLGAYQTEFPEGPTEQLMKGKITFSQWVPLMDESYRKSSKACGANLPENFSISQIFSQAMAARSINRPMLQAAIALKKKGFTTCIVTNNWLDDGDKRDSLAQMMCELSQHFDFLIESCQVGMIKPEPQIYNFLLDTLKAKPNEVVFLDDFGSNLKPARDMGMVTILVHNTASALRELEKVTGTQFPEAPLPVPCNPNDVSHGYVTVKPGIRLHFVEMGSGPALCLCHGFPESWFSWRYQIPALAQAGFRVLAIDMKGYGDSSSPPEIEEYAMELLCKEMVTFLDKLGIPQAVFIGHDWAGVMVWNMALFYPERVRAVASLNTPFMPPDPDVSPMKVIRSIPVFNYQLYFQEPGVAEAELEKNMSRTFKSFFRASDETGFIAVHKATEIGGILVNTPEDPNLSKITTEEEIEFYIQQFKKTGFRGPLNWYRNTERNWKWSCKGLGRKILVPALMVTAEKDIVLRPEMSKNMEKWIPFLKRGHIEDCGHWTQIEKPTEVNQILIKWLQTEVQNPSVTSKI.

The segment at Met1 to Ala224 is phosphatase. 2 residues coordinate Mg(2+): Asp9 and Asp11. Lys55 is subject to N6-succinyllysine. Residue Thr123–Asn124 participates in phosphate binding. N6-acetyllysine; alternate is present on Lys176. Residue Lys176 is modified to N6-succinyllysine; alternate. Asp185 lines the Mg(2+) pocket. An N6-acetyllysine mark is found at Lys191 and Lys215. An epoxide hydrolase region spans residues Asn233–Ile554. Residues Pro257–Pro530 enclose the AB hydrolase-1 domain. Catalysis depends on Asp333, which acts as the Nucleophile. At Ser368 the chain carries Phosphoserine. At Lys371 the chain carries N6-succinyllysine. Position 381 (Tyr381) interacts with substrate. An N6-succinyllysine mark is found at Lys420 and Lys454. Tyr465 serves as the catalytic Proton donor. Position 504 is an N6-succinyllysine (Lys504). Position 508 is an N6-acetyllysine; alternate (Lys508). Position 508 is an N6-succinyllysine; alternate (Lys508). The S-(15-deoxy-Delta12,14-prostaglandin J2-9-yl)cysteine moiety is linked to residue Cys521. The active-site Proton acceptor is the His523. A Microbody targeting signal motif is present at residues Ser552–Ile554. An N6-succinyllysine modification is found at Lys553.

The protein belongs to the AB hydrolase superfamily. Epoxide hydrolase family. In terms of assembly, homodimer. Mg(2+) is required as a cofactor. The N-terminus is blocked. Post-translationally, the covalent modification of cysteine by 15-deoxy-Delta12,14-prostaglandin-J2 is autocatalytic and reversible. It may occur as an alternative to other cysteine modifications, such as S-nitrosylation and S-palmitoylation. As to expression, detected in liver, intestine, ovary and kidney. Detected at low levels in heart and muscle.

The protein localises to the cytoplasm. The protein resides in the peroxisome. It catalyses the reaction an epoxide + H2O = an ethanediol. The catalysed reaction is (9S,10S)-10-hydroxy-9-(phosphooxy)octadecanoate + H2O = (9S,10S)-9,10-dihydroxyoctadecanoate + phosphate. The enzyme catalyses 8-hydroxy-(11S,12S)-epoxy-(5Z,9E,14Z)-eicosatrienoate + H2O = (8,11R,12S)-trihydroxy-(5Z,9E,14Z)-eicosatrienoate. It carries out the reaction 10-hydroxy-(11S,12S)-epoxy- (5Z,8Z,14Z)-eicosatrienoate + H2O = (10,11S,12R)-trihydroxy-(5Z,8Z,14Z)-eicosatrienoate. It catalyses the reaction (8S,9R)-epoxy-(5Z,11Z,14Z)-eicosatrienoate + H2O = (8S,9S)-dihydroxy-(5Z,11Z,14Z)-eicosatrienoate. The catalysed reaction is (11S,12R)-epoxy-(5Z,8Z,14Z)-eicosatrienoate + H2O = (11R,12R)-dihydroxy-(5Z,8Z,14Z)-eicosatrienoate. The enzyme catalyses (11S,12R)-epoxy-(5Z,8Z,14Z)-eicosatrienoate + H2O = (11S,12S)-dihydroxy-(5Z,8Z,14Z)-eicosatrienoate. It carries out the reaction (14S,15R)-epoxy-(5Z,8Z,11Z)-eicosatrienoate + H2O = (14R,15R)-dihydroxy-(5Z,8Z,11Z)-eicosatrienoate. It catalyses the reaction (14S,15R)-epoxy-(5Z,8Z,11Z)-eicosatrienoate + H2O = (14S,15S)-dihydroxy-(5Z,8Z,11Z)-eicosatrienoate. The catalysed reaction is (11R,12S)-epoxy-(5Z,8Z,14Z)-eicosatrienoate + H2O = (11S,12S)-dihydroxy-(5Z,8Z,14Z)-eicosatrienoate. The enzyme catalyses (11R,12S)-epoxy-(5Z,8Z,14Z)-eicosatrienoate + H2O = (11R,12R)-dihydroxy-(5Z,8Z,14Z)-eicosatrienoate. It carries out the reaction (8S,9R)-epoxy-(5Z,11Z,14Z)-eicosatrienoate + H2O = (8R,9R)-dihydroxy-(5Z,11Z,14Z)-eicosatrienoate. It catalyses the reaction 12-phosphooxy-(9Z)-octadecenoate + H2O = 12-hydroxy-(9Z)-octadecenoate + phosphate. The catalysed reaction is 12-phosphooxy-(9E)-octadecenoate + H2O = 12-hydroxy-(9E)-octadecenoate + phosphate. The enzyme catalyses 12-(phosphooxy)octadecanoate + H2O = 12-hydroxyoctadecanoate + phosphate. It carries out the reaction 8,9-epoxy-(5Z,11Z,14Z)-eicosatrienoate + H2O = 8,9-dihydroxy-(5Z,11Z,14Z)-eicosatrienoate. It catalyses the reaction 11,12-epoxy-(5Z,8Z,14Z)-eicosatrienoate + H2O = 11,12-dihydroxy-(5Z,8Z,14Z)-eicosatrienoate. The catalysed reaction is 14,15-epoxy-(5Z,8Z,11Z)-eicosatrienoate + H2O = 14,15-dihydroxy-(5Z,8Z,11Z)-eicosatrienoate. The enzyme catalyses 9,10-epoxy-(12Z)-octadecenoate + H2O = 9,10-dihydroxy-(12Z)-octadecenoate. It carries out the reaction 1-tetradecanoyl-sn-glycerol 3-phosphate + H2O = 1-tetradecanoyl-sn-glycerol + phosphate. It catalyses the reaction 1-octadecanoyl-sn-glycero-3-phosphate + H2O = 1-octadecanoyl-sn-glycerol + phosphate. The catalysed reaction is 1-(5Z,8Z,11Z,14Z-eicosatetraenoyl)-sn-glycero-3-phosphate + H2O = 1-(5Z,8Z,11Z,14Z-eicosatetraenoyl)-sn-glycerol + phosphate. The enzyme catalyses 1-hexadecanoyl-sn-glycero-3-phosphate + H2O = 1-hexadecanoyl-sn-glycerol + phosphate. It carries out the reaction 1-(9Z-octadecenoyl)-sn-glycero-3-phosphate + H2O = 1-(9Z-octadecenoyl)-sn-glycerol + phosphate. It catalyses the reaction (14R,15S)-epoxy-(5Z,8Z,11Z)-eicosatrienoate + H2O = (14R,15R)-dihydroxy-(5Z,8Z,11Z)-eicosatrienoate. With respect to regulation, inhibited by 1-(1-acetylpiperidin-4-yl)-3-(4-(trifl uoromethoxy)phenyl)urea (TPAU), 1-cyclohexyl-3-dodecylurea (CDU), 12-(3-adamantan-1-yl-ureido)-dodecanoic acid (AUDA), 1-((3S, 5S, 7S)-adamantan-1-yl)-3-(5-(2-(2-ethoxyethoxy) ethoxy)pentyl)urea (AEPU), N-adamantyl-N[']-cyclohexyl urea (ACU), 4-(((1S, 4S)-4-(3-((3S, 5S, 7S)-adamantan-1-yl) ureido)cyclohexyl)oxy)benzoic acid (c-AUCB), 4-(((1R, 4R)-4-(3-((3S, 5S, 7S)-adamantan-1-yl)ureido)cyclohexyl)oxy)benzoic acid (t-AUCB), 4-(((1R, 4R)-4-(3-(4(trifluoromethoxy)phenyl)ureido)cyclohexyl)oxy)benzoic acid (t-TAUCB) and to a lesser extent by 8-(3-((3S, 5S, 7S)-adamantan-1-yl)ureido) octanoic acid (AUOA). Phosphatase activity is inhibited by dodecyl-phosphate, phospholipids such as phospho-lysophosphatidic acids and fatty acids such as palmitic acid and lauric acid. Functionally, bifunctional enzyme. The C-terminal domain has epoxide hydrolase activity and acts on epoxides (alkene oxides, oxiranes) and arene oxides. Plays a role in xenobiotic metabolism by degrading potentially toxic epoxides. Also determines steady-state levels of physiological mediators. Its function is as follows. Bifunctional enzyme. The N-terminal domain has lipid phosphatase activity, with the highest activity towards threo-9,10-phosphonooxy-hydroxy-octadecanoic acid, followed by erythro-9,10-phosphonooxy-hydroxy-octadecanoic acid, 12-phosphonooxy-octadec-9Z-enoic acid and 12-phosphonooxy-octadec-9E-enoic acid. Has phosphatase activity toward lyso-glycerophospholipids with also some lower activity toward lysolipids of sphingolipid and isoprenoid phosphates. The polypeptide is Bifunctional epoxide hydrolase 2 (Mus musculus (Mouse)).